A 55-amino-acid chain; its full sequence is Ovomucoid (55 aa).

Residues 5–55 (VDCSEHPKPACTLDYRPICGSDSKTYSNKCDFCNAVMDSNGTLTLSHFGKC) form the Kazal-like domain. Cystine bridges form between C7-C37, C15-C34, and C23-C55. N-linked (GlcNAc...) asparagine glycosylation occurs at N44.

The protein resides in the secreted. This is Ovomucoid from Dacelo novaeguineae (Laughing kookaburra).